The chain runs to 36 residues: Turgencin-A (36 aa).

Cystine bridges form between cysteine 8-cysteine 33, cysteine 12-cysteine 29, and cysteine 17-cysteine 26. Methionine sulfoxide is present on methionine 10. Valine 36 carries the valine amide modification.

It is found in the secreted. In terms of biological role, has antimicrobial activity against Gram-positive bacteria (C.glutamicum ATCC 13032 (MIC=0.4 uM), B.subtilis ATCC 23857 (MIC=0.4 uM) and S.aureus ATCC 9144 (MIC=6.3 uM)) and Gram-negative bacteria (E.coli ATCC 25922 (MIC=0.8 uM) and P.aeruginosa ATCC 27853 (MIC=1.6 uM)). The protein is Turgencin-A of Synoicum turgens (Colonial ascidian).